The sequence spans 429 residues: Methylenetetrahydrofolate--tRNA-(uracil-5-)-methyltransferase TrmFO (429 aa).

7 to 12 serves as a coordination point for FAD; the sequence is GAGLAG.

Belongs to the MnmG family. TrmFO subfamily. Requires FAD as cofactor.

The protein localises to the cytoplasm. It carries out the reaction uridine(54) in tRNA + (6R)-5,10-methylene-5,6,7,8-tetrahydrofolate + NADH + H(+) = 5-methyluridine(54) in tRNA + (6S)-5,6,7,8-tetrahydrofolate + NAD(+). The catalysed reaction is uridine(54) in tRNA + (6R)-5,10-methylene-5,6,7,8-tetrahydrofolate + NADPH + H(+) = 5-methyluridine(54) in tRNA + (6S)-5,6,7,8-tetrahydrofolate + NADP(+). Catalyzes the folate-dependent formation of 5-methyl-uridine at position 54 (M-5-U54) in all tRNAs. This Thermosipho africanus (strain TCF52B) protein is Methylenetetrahydrofolate--tRNA-(uracil-5-)-methyltransferase TrmFO.